The chain runs to 364 residues: Sulfate/thiosulfate import ATP-binding protein CysA (364 aa).

In terms of domain architecture, ABC transporter spans 3–237 (IEIARIKKSF…PATRFVLEFM (235 aa)). Residue 35 to 42 (GPSGSGKT) participates in ATP binding.

The protein belongs to the ABC transporter superfamily. Sulfate/tungstate importer (TC 3.A.1.6) family. In terms of assembly, the complex is composed of two ATP-binding proteins (CysA), two transmembrane proteins (CysT and CysW) and a solute-binding protein (CysP).

The protein resides in the cell inner membrane. It catalyses the reaction sulfate(out) + ATP + H2O = sulfate(in) + ADP + phosphate + H(+). It carries out the reaction thiosulfate(out) + ATP + H2O = thiosulfate(in) + ADP + phosphate + H(+). In terms of biological role, part of the ABC transporter complex CysAWTP involved in sulfate/thiosulfate import. Responsible for energy coupling to the transport system. This Salmonella typhi protein is Sulfate/thiosulfate import ATP-binding protein CysA.